The sequence spans 110 residues: Endoribonuclease SymE (110 aa).

The region spanning 29–74 (SRYPDYTRIPALTMKGQWLEAAGFATGTEVDVRVMNGCIVLTAQQP) is the SpoVT-AbrB domain.

Belongs to the SymE family.

Its subcellular location is the cytoplasm. Its function is as follows. Involved in the degradation and recycling of damaged RNA. It is itself a target for degradation by the ATP-dependent protease Lon. In Salmonella heidelberg (strain SL476), this protein is Endoribonuclease SymE.